The sequence spans 260 residues: MEQTLKGDETGWWVVSDAVQIWMPQGELPRGTATEWSLQGKTARQIGEWQGQPAWLVCQGRDTDMASVRQLLDQDVGLFQLAGRGVQLAEFYRSHRFCGYCGHEMVRSKTELACLCHHCKERYYPQIAPCIIVAIRRGEEILLAQHNRHRGNMYTVLAGFVEVGETLEQTVVREVMEESQIQIKNLRYVSSQPWPFPHSLMMAFMADYAGGDIKHDPKELRDAGWFRYDQLPQLPPPGTVARRLIEDTVVLCRAYHENEG.

A substrate-binding site is contributed by Arg-69. Zn(2+) contacts are provided by Cys-98 and Cys-101. Residue Glu-111 coordinates substrate. The Zn(2+) site is built by Cys-116 and Cys-119. Tyr-124 is a substrate binding site. Positions Pro-125–Thr-248 constitute a Nudix hydrolase domain. A divalent metal cation is bound by residues Ala-158, Glu-174, and Glu-178. A Nudix box motif is present at residues Gly-159–Gln-180. A substrate-binding site is contributed by Gln-192–Ser-199. Glu-219 is an a divalent metal cation binding site. Residue Ala-241 participates in substrate binding.

It belongs to the Nudix hydrolase family. NudC subfamily. As to quaternary structure, homodimer. It depends on Mg(2+) as a cofactor. Mn(2+) is required as a cofactor. The cofactor is Zn(2+).

It carries out the reaction a 5'-end NAD(+)-phospho-ribonucleoside in mRNA + H2O = a 5'-end phospho-adenosine-phospho-ribonucleoside in mRNA + beta-nicotinamide D-ribonucleotide + 2 H(+). The catalysed reaction is NAD(+) + H2O = beta-nicotinamide D-ribonucleotide + AMP + 2 H(+). It catalyses the reaction NADH + H2O = reduced beta-nicotinamide D-ribonucleotide + AMP + 2 H(+). MRNA decapping enzyme that specifically removes the nicotinamide adenine dinucleotide (NAD) cap from a subset of mRNAs by hydrolyzing the diphosphate linkage to produce nicotinamide mononucleotide (NMN) and 5' monophosphate mRNA. The NAD-cap is present at the 5'-end of some mRNAs and stabilizes RNA against 5'-processing. Has preference for mRNAs with a 5'-end purine. Catalyzes the hydrolysis of a broad range of dinucleotide pyrophosphates. The chain is NAD-capped RNA hydrolase NudC from Pectobacterium atrosepticum (strain SCRI 1043 / ATCC BAA-672) (Erwinia carotovora subsp. atroseptica).